The following is a 268-amino-acid chain: Eukaryotic translation initiation factor 3 subunit G-2 (268 aa).

Positions 187 to 265 (SAVRISNLSE…LILCVEWSKP (79 aa)) constitute an RRM domain.

The protein belongs to the eIF-3 subunit G family. Component of the eukaryotic translation initiation factor 3 (eIF-3) complex. The eIF-3 complex interacts with pix.

It localises to the cytoplasm. RNA-binding component of the eukaryotic translation initiation factor 3 (eIF-3) complex, which is involved in protein synthesis of a specialized repertoire of mRNAs and, together with other initiation factors, stimulates binding of mRNA and methionyl-tRNAi to the 40S ribosome. The eIF-3 complex specifically targets and initiates translation of a subset of mRNAs involved in cell proliferation. This subunit can bind 18S rRNA. The chain is Eukaryotic translation initiation factor 3 subunit G-2 from Drosophila willistoni (Fruit fly).